Consider the following 539-residue polypeptide: Polyol transporter 5 (539 aa).

The segment covering 1–11 (MTGATPENRTA) has biased composition (polar residues). The disordered stretch occupies residues 1–24 (MTGATPENRTAPSPPPVKHVPESV). A run of 12 helical transmembrane segments spans residues 37–57 (FACAILASMTSILLGYDIGVM), 73–93 (LQIGILAGSLNIYSLIGSCAA), 104–124 (YTIVLAGAIFFAGAILMGLSP), 127–147 (AFLMFGRFIAGIGVGYALMIA), 165–185 (SFPEVFINAGIMLGYVSNLAF), 196–216 (LMLGIGAVPSVILAIGVLAMP), 296–316 (IAAIGIHFFQQASGIDAVVLF), 333–353 (LLATVAVGVVKTSFILVATFL), 364–384 (LTSVGGMVLSLAALGTSLTII), 391–411 (VMWAVVVAIATVMTYVATFSI), 433–453 (GSSMGVVVNRVTSGVISISFL), and 463–483 (GAFYLFGGIATVAWVFFYTFL). 2 stretches are compositionally biased toward basic and acidic residues: residues 503-514 (WRDSKSKPKGNP) and 530-539 (QWKEGDTQSS). Positions 503-539 (WRDSKSKPKGNPEKTVPNPEVEIGSNKQWKEGDTQSS) are disordered.

Belongs to the major facilitator superfamily. Sugar transporter (TC 2.A.1.1) family. As to expression, highly expressed in roots. Expressed in vascular tissue of leaves, sepals and siliques.

The protein localises to the cell membrane. In terms of biological role, plasma membrane broad-spectrum sugar-proton symporter. Mediates the uptake of linear polyols such as sorbitol, xylitol, erythritol or glycerol. Can transport the cyclic polyol myo-inositol and different hexoses, pentoses (including ribose), tetroses and sugar alcohols. This is Polyol transporter 5 (PLT5) from Arabidopsis thaliana (Mouse-ear cress).